The sequence spans 522 residues: Sulfite reductase [NADPH] flavoprotein alpha-component (522 aa).

The 139-residue stretch at 60–198 (ITILFGSQTG…DTERWSSDAL (139 aa)) folds into the Flavodoxin-like domain. Positions 217 to 242 (TLRSHQDLRSHQEQSRNRARPYDKDN) are disordered. Residues 220–242 (SHQDLRSHQEQSRNRARPYDKDN) show a composition bias toward basic and acidic residues. An FAD-binding FR-type domain is found at 241–399 (DNPYTATLLE…VAPYRAFLQQ (159 aa)).

In terms of assembly, alpha(8)-beta(8). The alpha component is a flavoprotein, the beta component is a hemoprotein. The cofactor is FAD. It depends on FMN as a cofactor.

The enzyme catalyses hydrogen sulfide + 3 NADP(+) + 3 H2O = sulfite + 3 NADPH + 4 H(+). In terms of biological role, catalyzes the 6-electron reduction of sulfite to sulfide. This is one of several activities required for the biosynthesis of L-cysteine from sulfate. The flavo-protein component catalyzes the electron flow from NADPH -&gt; FAD -&gt; FMN to the hemoprotein component. The sequence is that of Sulfite reductase [NADPH] flavoprotein alpha-component (cysJ) from Thiocapsa roseopersicina.